The chain runs to 189 residues: Thymidine kinase (189 aa).

Residues Gly-9–Thr-16 and Asp-85–Gln-88 contribute to the ATP site. Glu-86 serves as the catalytic Proton acceptor. 4 residues coordinate Zn(2+): Cys-143, Cys-146, Cys-180, and His-183.

This sequence belongs to the thymidine kinase family. As to quaternary structure, homotetramer.

It localises to the cytoplasm. The enzyme catalyses thymidine + ATP = dTMP + ADP + H(+). The polypeptide is Thymidine kinase (Streptococcus agalactiae serotype Ia (strain ATCC 27591 / A909 / CDC SS700)).